We begin with the raw amino-acid sequence, 321 residues long: Inner membrane protein YtfF (321 aa).

The Cytoplasmic portion of the chain corresponds to 1–4 (MISG). The chain crosses the membrane as a helical span at residues 5–25 (VLYALLAGLMWGLIFVGPLIV). Positions 13-141 (LMWGLIFVGP…IGIGLACVNI (129 aa)) constitute an EamA domain. Residues 26–30 (PEYPA) are Periplasmic-facing. Residues 31–51 (MLQSMGRYLALGLIALPIAWL) form a helical membrane-spanning segment. At 52–65 (GRVRLRQLARRDWL) the chain is on the cytoplasmic side. Residues 66–86 (TALMLTMMGNLIYYFCLASAI) traverse the membrane as a helical segment. Over 87–92 (QRTGAP) the chain is Periplasmic. The helical transmembrane segment at 93–113 (VSTMIIGTLPVVIPVFANLLY) threads the bilayer. Residues 114-120 (SQRDGKL) lie on the Cytoplasmic side of the membrane. A helical membrane pass occupies residues 121 to 141 (AWGKLAPALICIGIGLACVNI). Over 142–154 (AELNHGLPDFDWA) the chain is Periplasmic. The helical transmembrane segment at 155 to 175 (RYTSGIVLALVSVVCWAWYAL) threads the bilayer. Residues 176–194 (RNARWLRENPDKHPMMWAT) lie on the Cytoplasmic side of the membrane. A helical membrane pass occupies residues 195–215 (AQALVTLPVSLIGYLVACYWL). Residues 216-230 (NTQTPDFSLPFGPRP) lie on the Periplasmic side of the membrane. The chain crosses the membrane as a helical span at residues 231–251 (LVFISLMVAIAVLCSWVGALC). At 252–261 (WNVASQLLPT) the chain is on the cytoplasmic side. A helical membrane pass occupies residues 262 to 282 (VILGPLIVFETLAGLLYTFLL). At 283–285 (RQQ) the chain is on the periplasmic side. The chain crosses the membrane as a helical span at residues 286–306 (MPPLMTLSGIALLVIGVVIAV). At 307–321 (RAKPEKPLTESVSES) the chain is on the cytoplasmic side.

It is found in the cell inner membrane. The sequence is that of Inner membrane protein YtfF (ytfF) from Escherichia coli (strain K12).